Consider the following 388-residue polypeptide: ATP phosphoribosyltransferase regulatory subunit (388 aa).

The protein belongs to the class-II aminoacyl-tRNA synthetase family. HisZ subfamily. As to quaternary structure, heteromultimer composed of HisG and HisZ subunits.

It is found in the cytoplasm. It functions in the pathway amino-acid biosynthesis; L-histidine biosynthesis; L-histidine from 5-phospho-alpha-D-ribose 1-diphosphate: step 1/9. Its function is as follows. Required for the first step of histidine biosynthesis. May allow the feedback regulation of ATP phosphoribosyltransferase activity by histidine. This chain is ATP phosphoribosyltransferase regulatory subunit, found in Acinetobacter baumannii (strain AB307-0294).